The following is a 353-amino-acid chain: Ion-translocating oxidoreductase complex subunit D (353 aa).

3 helical membrane-spanning segments follow: residues 20 to 39 (LMRL…WYFF), 68 to 88 (PISH…LGIC), and 129 to 149 (VMLL…LTLV). Threonine 187 is subject to FMN phosphoryl threonine. 4 helical membrane passes run 215–235 (LALG…FLIS), 238–258 (AIAW…SFIG), 267–287 (ASTM…FILT), and 300–320 (IIVG…GGYP).

Belongs to the NqrB/RnfD family. As to quaternary structure, the complex is composed of six subunits: RnfA, RnfB, RnfC, RnfD, RnfE and RnfG. FMN is required as a cofactor.

It is found in the cell inner membrane. Functionally, part of a membrane-bound complex that couples electron transfer with translocation of ions across the membrane. This Colwellia psychrerythraea (strain 34H / ATCC BAA-681) (Vibrio psychroerythus) protein is Ion-translocating oxidoreductase complex subunit D.